The chain runs to 306 residues: Homoserine O-acetyltransferase (306 aa).

Residue Cys-142 is the Acyl-thioester intermediate of the active site. Substrate-binding residues include Lys-163 and Ser-192. His-235 (proton acceptor) is an active-site residue. Glu-237 is an active-site residue. Residue Arg-249 coordinates substrate.

Belongs to the MetA family.

It localises to the cytoplasm. The enzyme catalyses L-homoserine + acetyl-CoA = O-acetyl-L-homoserine + CoA. The protein operates within amino-acid biosynthesis; L-methionine biosynthesis via de novo pathway; O-acetyl-L-homoserine from L-homoserine: step 1/1. In terms of biological role, transfers an acetyl group from acetyl-CoA to L-homoserine, forming acetyl-L-homoserine. The sequence is that of Homoserine O-acetyltransferase from Clostridium botulinum (strain Alaska E43 / Type E3).